The primary structure comprises 170 residues: Flavodoxin (170 aa).

Residues 5–165 (IGLFYGTQTG…RIKSWVAQLK (161 aa)) form the Flavodoxin-like domain.

The protein belongs to the flavodoxin family. It depends on FMN as a cofactor.

In terms of biological role, low-potential electron donor to a number of redox enzymes. The protein is Flavodoxin (isiB) of Nostoc sp. (strain PCC 7120 / SAG 25.82 / UTEX 2576).